We begin with the raw amino-acid sequence, 409 residues long: uncharacterized protein (409 aa).

Helical transmembrane passes span 53-73, 83-103, 115-135, 141-161, 183-203, 205-225, 243-263, 265-285, 299-319, and 329-349; these read IITL…YVHC, WCYF…NVDG, LGEL…AIVM, IGPY…YLAH, VLFM…WTYG, STTV…VTCL, CLLQ…WASV, NLIT…FGYI, CSLF…SILA, and TVAL…FSYF. Residues 388 to 401 show a composition bias toward polar residues; it reads EEGSSSIGNSTDDI. The tract at residues 388-409 is disordered; that stretch reads EEGSSSIGNSTDDINPSEIEEI.

Belongs to the CDP-alcohol phosphatidyltransferase class-I family.

It localises to the membrane. This is an uncharacterized protein from Dictyostelium discoideum (Social amoeba).